The primary structure comprises 235 residues: Uracil-DNA glycosylase (235 aa).

The Proton acceptor role is filled by Asp71.

It belongs to the uracil-DNA glycosylase (UDG) superfamily. UNG family.

The protein resides in the cytoplasm. The catalysed reaction is Hydrolyzes single-stranded DNA or mismatched double-stranded DNA and polynucleotides, releasing free uracil.. In terms of biological role, excises uracil residues from the DNA which can arise as a result of misincorporation of dUMP residues by DNA polymerase or due to deamination of cytosine. This is Uracil-DNA glycosylase from Campylobacter hominis (strain ATCC BAA-381 / DSM 21671 / CCUG 45161 / LMG 19568 / NCTC 13146 / CH001A).